The following is an 866-amino-acid chain: Leucine--tRNA ligase (866 aa).

Positions 42 to 52 (PYPSGKLHMGH) match the 'HIGH' region motif. A 'KMSKS' region motif is present at residues 630 to 634 (KMSKS). K633 lines the ATP pocket.

Belongs to the class-I aminoacyl-tRNA synthetase family.

Its subcellular location is the cytoplasm. It carries out the reaction tRNA(Leu) + L-leucine + ATP = L-leucyl-tRNA(Leu) + AMP + diphosphate. The protein is Leucine--tRNA ligase of Laribacter hongkongensis (strain HLHK9).